The primary structure comprises 469 residues: Acyltransferase clz18 (469 aa).

Transmembrane regions (helical) follow at residues 21–41 (GLLS…LGYD), 70–90 (LFTI…CLFF), 134–154 (LSLL…TGFF), 253–273 (ILAA…PLFW), 346–366 (GLIV…LYSL), 391–411 (IYLI…SWVW), and 424–444 (VGFG…AAIF).

The protein belongs to the acyltransferase 3 family.

The protein localises to the membrane. It functions in the pathway secondary metabolite biosynthesis. Acyltransferase; part of the gene cluster that mediates the biosynthesis of squalestatin S1 (SQS1, also known as zaragozic acid A), a heavily oxidized fungal polyketide that offers potent cholesterol lowering activity by targeting squalene synthase (SS). SQS1 is composed of a 2,8-dioxobicyclic[3.2.1]octane-3,4,5-tricarboxyclic acid core that is connected to two lipophilic polyketide arms. These initial steps feature the priming of an unusual benzoic acid starter unit onto the highly reducing polyketide synthase clz14, followed by oxaloacetate extension and product release to generate a tricarboxylic acid containing product. The phenylalanine ammonia lyase (PAL) clz10 and the acyl-CoA ligase clz12 are involved in transforming phenylalanine into benzoyl-CoA. The citrate synthase-like protein clz17 is involved in connecting the C-alpha-carbons of the hexaketide chain and oxaloacetate to afford the tricarboxylic acid unit. The potential hydrolytic enzymes, clz11 and clz13, are in close proximity to pks2 and may participate in product release. On the other side, the tetraketide arm is synthesized by a the squalestatin tetraketide synthase clz2 and enzymatically esterified to the core in the last biosynthetic step, by the acetyltransferase clz6. The biosynthesis of the tetraketide must involve 3 rounds of chain extension. After the first and second rounds methyl-transfer occurs, and in all rounds of extension the ketoreductase and dehydratase are active. The enoyl reductase and C-MeT of clz2 are not active in the final round of extension. The acetyltransferase clz6 appears to have a broad substrate selectivity for its acyl CoA substrate, allowing the in vitro synthesis of novel squalestatins. The biosynthesis of SQS1 requires several oxidative steps likely performed by oxidoreductases clz3, clz15 and clz16. Finally, in support of the identification of the cluster as being responsible for SQS1 production, the cluster contains a gene encoding a putative squalene synthase (SS) clz20, suggesting a likely mechanism for self-resistance. The protein is Acyltransferase clz18 of Cochliobolus lunatus (Filamentous fungus).